The primary structure comprises 466 residues: Glutamate--tRNA ligase 2 (466 aa).

A 'HIGH' region motif is present at residues 11 to 21 (PSPTGFLHIGG). Positions 239–243 (KLSKR) match the 'KMSKS' region motif. K242 provides a ligand contact to ATP.

Belongs to the class-I aminoacyl-tRNA synthetase family. Glutamate--tRNA ligase type 1 subfamily. In terms of assembly, monomer.

It is found in the cytoplasm. The enzyme catalyses tRNA(Glu) + L-glutamate + ATP = L-glutamyl-tRNA(Glu) + AMP + diphosphate. Catalyzes the attachment of glutamate to tRNA(Glu) in a two-step reaction: glutamate is first activated by ATP to form Glu-AMP and then transferred to the acceptor end of tRNA(Glu). In Roseobacter denitrificans (strain ATCC 33942 / OCh 114) (Erythrobacter sp. (strain OCh 114)), this protein is Glutamate--tRNA ligase 2.